A 55-amino-acid chain; its full sequence is Small ribosomal subunit protein uS14 (55 aa).

Residues 1-20 (MSFEPSGPHSHRKPFGKGSR) form a disordered region. Residues cysteine 22, cysteine 25, cysteine 38, and cysteine 41 each coordinate Zn(2+).

This sequence belongs to the universal ribosomal protein uS14 family. Requires Zn(2+) as cofactor.

The chain is Small ribosomal subunit protein uS14 (RPS29) from Encephalitozoon cuniculi (strain GB-M1) (Microsporidian parasite).